The primary structure comprises 281 residues: MKLIIISGRSGSGKSIVLRSLEDLGYYCVDNIPVNLLPTLTHTVADEYDQVAVSIDVRNLPKDPNELVEILDYLPSTWEMTILYLDASDDVLIKRFSETRRLHPLSKQNKSLSGAIQAESQLLAPIAERADLYIDTDQLSIHQLAELVRERILGKKSSRLVLVFESFGFKHGIPKDADYVFDARFLPNPHWEPDLKPLTGLDSPVEIFLGSQPIVTKFIWQIQNLISTWLPHLERNNRSYVTIAIGCTGGQHRSVYVVEMLAKTFSTSHPDVQIRHRELNR.

8 to 15 contacts ATP; sequence GRSGSGKS. Position 56–59 (56–59) interacts with GTP; it reads DVRN.

The protein belongs to the RapZ-like family.

Its function is as follows. Displays ATPase and GTPase activities. In Pseudoalteromonas atlantica (strain T6c / ATCC BAA-1087), this protein is Nucleotide-binding protein Patl_0571.